The primary structure comprises 443 residues: Immediate-early protein ICP-46 homolog (443 aa).

Residues Glu82–Ser110 adopt a coiled-coil conformation.

Belongs to the IIV-6 393L family.

The sequence is that of Immediate-early protein ICP-46 homolog from Aedes vexans (Inland floodwater mosquito).